Reading from the N-terminus, the 570-residue chain is MSRLEAKKPSLCKSEPLTTERVRTTLSVFKRIVTSCYGPSGRLKQLHNGFGGYVCTTSQSSALLSHLLVTHPILKILTTSIQNHVSSFSDCGLFTAILCCNLIENVQRLDLTPTTVIRLNKHLLSLCISYLKSETCGCRIPVDFGSTQILLCFVRSVLTSKPACMLTRKETEHVSALILRAFLLTIPENAEGHIILGKSLIVPLKGQRVIDSTVLPGILIEMSEVQLMRLLPIKKSTALKVALFCTTLSGDISDTGEGTVVVSYGVSLENAALDQLLNLGRQLISDHVDLVLCQKVIHPSLKQFLNMHRIIAIDRIGVTLMEPLTKMTGTQPIGSLGSISPNSYGSVKDVCTAKFGSKHFFHLIPNEATICSLLLCNRNDTAWDELKLTCQTALHVLQLTLKEPWALLGGGCTETHLAAYIRHKTHNDPESILKDDECTQTELQLIAEAFCSALESVVGSLEHDGGEILTDMKYGHLWSVQADSPCVANWPDLLSQCGCGLYNSQEELNWSFLRSTRRPFVPQTCLPHEAVGSASNLTLDCLTAKLSGLQVAVETANLILDLSYVIEDKN.

192–199 (GHIILGKS) lines the ATP pocket. The segment at 198 to 370 (KSLIVPLKGQ…FHLIPNEATI (173 aa)) is substrate-binding apical domain.

It belongs to the TCP-1 chaperonin family. In terms of assembly, component of a complex composed at least of MKKS, BBS10, BBS12, TCP1, CCT2, CCT3, CCT4, CCT5 and CCT8. Interacts with STUB1. Interacts with BBS2 (via coiled coil domain). Interacts with CCDC28B. Interacts with BBS12. Interacts with SMARCC1, a component of the SWI/SNF complexes; the interaction takes place predominantly in the cytoplasm and may modulate SMARCC1 location. Interacts with DLEC1.

It localises to the cytoplasm. The protein resides in the cytoskeleton. Its subcellular location is the microtubule organizing center. It is found in the centrosome. The protein localises to the cytosol. It localises to the nucleus. Its function is as follows. Probable molecular chaperone that assists the folding of proteins upon ATP hydrolysis. Plays a role in the assembly of BBSome, a complex involved in ciliogenesis regulating transports vesicles to the cilia. May play a role in protein processing in limb, cardiac and reproductive system development. May play a role in cytokinesis. In Pongo abelii (Sumatran orangutan), this protein is Molecular chaperone MKKS (MKKS).